Here is a 94-residue protein sequence, read N- to C-terminus: Secretoglobin family 1C member 1 (94 aa).

Residues 1–22 (MKGSSALLVALTVLCICGLTRA) form the signal peptide.

Belongs to the secretoglobin family. Expressed in the olfactory mucosa.

The protein localises to the secreted. The sequence is that of Secretoglobin family 1C member 1 (Scgb1c1) from Rattus norvegicus (Rat).